Here is a 47-residue protein sequence, read N- to C-terminus: SCFEGGKDCKNDCQCCGKWSYCKCPIWGLFGCSCVIGDSMVEVRKCQ.

Cystine bridges form between cysteine 2/cysteine 16, cysteine 9/cysteine 22, cysteine 13/cysteine 46, cysteine 15/cysteine 34, and cysteine 24/cysteine 32.

In terms of tissue distribution, expressed by the venom gland.

Its subcellular location is the secreted. Functionally, neurotoxin. Causes spastic paralysis and death in mice by intracerebroventricular injection at dose levels of 3 ug per mouse. In Phoneutria nigriventer (Brazilian armed spider), this protein is U18-ctenitoxin-Pn1a.